The primary structure comprises 448 residues: MNINAAPQILGRSSQDITPGYMSGFGNSFETEALPGALPVGRNSPQRCAYGLYAEQLSGSPFTAPRGANERSWLYRIRPSVKHSGRFAKTDMGLWRSAPCFEHDLPIAQLRWDPPPMPQEKLTFLQGVRTMTTAGDVNTQAGMATHLYLITQSMVDQHFYNADGEMMFVPQQGSLRLVTEFGIITIEPAEIAVIPRGIKFRVELVDGPARGYLCENYGGAFTLPERGPIGANCLANSRDFLTPVAAYEDKDTPTELYVKWGGSLYVTKLPHSPIDVVAWHGNYAPYKYDLRTYSPVGAIGFDHPDPSIFTVLTSPSETPGTANIDFVIFPERWMVADNTFRPPWYHMNIMSEFMGLIYGVYDAKPQGFVPGGASLHNMMLPHGPDREAFDHASNGELKPVKLTGTMAFMFETRYPQRVTEYAASSGLLQDDYADCWNGLEKRFDPNRP.

H303 serves as the catalytic Proton acceptor. H346 and E352 together coordinate Fe cation. Homogentisate-binding residues include Y361 and H382. H382 lines the Fe cation pocket.

The protein belongs to the homogentisate dioxygenase family. As to quaternary structure, hexamer; dimer of trimers. The cofactor is Fe cation.

The enzyme catalyses homogentisate + O2 = 4-maleylacetoacetate + H(+). The protein operates within amino-acid degradation; L-phenylalanine degradation; acetoacetate and fumarate from L-phenylalanine: step 4/6. In terms of biological role, involved in the catabolism of homogentisate (2,5-dihydroxyphenylacetate or 2,5-OH-PhAc), a central intermediate in the degradation of phenylalanine and tyrosine. Catalyzes the oxidative ring cleavage of the aromatic ring of homogentisate to yield maleylacetoacetate. The chain is Homogentisate 1,2-dioxygenase from Rhodopseudomonas palustris (strain TIE-1).